A 348-amino-acid chain; its full sequence is MTSGKNGITYAEAGVDIDAGNALVDRIKPAAKRTNRPGVASGLGGFGALFDLKAAGYQDPVLVAATDGVGTKLRIAIDTGLVDGVGIDLVAMCVNDLVCQGAEPLFFLDYFATGKLETDTAARIIEGIAEGCVQSGCALIGGETAEMPGMYPAGDFDLAGFAVGAMERGTALPEGVVEGDVLLGLASNGVHSNGYSLVRKLVEISGNTWESDCPFGDGKLGQALLTPTRLYVRQVLAAIRAGGVHALAHITGGGLTENLPRVLPEGMGATIDLDTWDLPPVFGWMAETGGIAEAEMLKTFNCGIGMIVVCAADRAEALAELLSAEGETVARIGTVTTTPGIAYTGKLL.

This sequence belongs to the AIR synthase family.

The protein resides in the cytoplasm. The catalysed reaction is 2-formamido-N(1)-(5-O-phospho-beta-D-ribosyl)acetamidine + ATP = 5-amino-1-(5-phospho-beta-D-ribosyl)imidazole + ADP + phosphate + H(+). The protein operates within purine metabolism; IMP biosynthesis via de novo pathway; 5-amino-1-(5-phospho-D-ribosyl)imidazole from N(2)-formyl-N(1)-(5-phospho-D-ribosyl)glycinamide: step 2/2. The polypeptide is Phosphoribosylformylglycinamidine cyclo-ligase (Ruegeria pomeroyi (strain ATCC 700808 / DSM 15171 / DSS-3) (Silicibacter pomeroyi)).